A 227-amino-acid polypeptide reads, in one-letter code: Urease accessory protein UreF (227 aa).

Belongs to the UreF family. UreD, UreF and UreG form a complex that acts as a GTP-hydrolysis-dependent molecular chaperone, activating the urease apoprotein by helping to assemble the nickel containing metallocenter of UreC. The UreE protein probably delivers the nickel.

The protein localises to the cytoplasm. Functionally, required for maturation of urease via the functional incorporation of the urease nickel metallocenter. The protein is Urease accessory protein UreF of Actinobacillus pleuropneumoniae (Haemophilus pleuropneumoniae).